Here is a 391-residue protein sequence, read N- to C-terminus: Pectin acetylesterase 11 (391 aa).

Residues 1–23 (MTWLKQMWSSILVLAVVVIGARA) form the signal peptide. Catalysis depends on charge relay system residues Ser-171, Asp-267, and His-334.

Belongs to the pectinacetylesterase family.

The protein localises to the secreted. It localises to the cell wall. Functionally, hydrolyzes acetyl esters in homogalacturonan regions of pectin. In type I primary cell wall, galacturonic acid residues of pectin can be acetylated at the O-2 and O-3 positions. Decreasing the degree of acetylation of pectin gels in vitro alters their physical properties. The sequence is that of Pectin acetylesterase 11 from Arabidopsis thaliana (Mouse-ear cress).